A 610-amino-acid polypeptide reads, in one-letter code: MFDAKAFLADVPHLPGVYRMYDAKNTIIYVGKAKDLKKRLSSYFRSQLASKKTEALVANIHHIETTITHSETEALLLEHNYIKENQPKYNVLLRDDKSYPYILLTKHQHPRITSFRGSKKVAGEYFGPYPNAGAVRETLNLLQKLFPIRQCEDSYYKNRSRPCLQYQIGRCLAPCVEGYYSQAEYDNQVNLVRLFLQGKDGQVVEHLVQKMENAAQELDFEAAARFRDQIQSVRAVQEKQFVSNERLDDLDIISIAYQHGIACVHILFVRHGKVLGNRSYFPKVPNNTDLSELADTFVGQFYLQMNQHRTIPNQIIIDQSLSEVTALANVLSEQAGHKVSIADKNIRGDKSRYLALAKTNAEAALTLQLKQDTHIRQRYDSLKALLNLAEIKRMECFDISHTMGNQTVASCVVFDKNGPLKSDYRRFNIEGITGGDDYAAMEQALLKLYDRNLEEEKIPDIIFIDGGKGQLNRALETFTSLNVSWDKRKPLLVGVAKGVERKAGLETLLISKWDKEIHLPPDSPALHLIQHIRDESHNHAITGHRKKRQKAFTESGLESIAGVGAKRRQALLKYLGGMQGVKAATLEEIQSVPGISKQLAEVIFDTLQHS.

Positions 13–91 (HLPGVYRMYD…IKENQPKYNV (79 aa)) constitute a GIY-YIG domain. Residues 201 to 236 (GQVVEHLVQKMENAAQELDFEAAARFRDQIQSVRAV) form the UVR domain.

Belongs to the UvrC family. Interacts with UvrB in an incision complex.

It is found in the cytoplasm. Functionally, the UvrABC repair system catalyzes the recognition and processing of DNA lesions. UvrC both incises the 5' and 3' sides of the lesion. The N-terminal half is responsible for the 3' incision and the C-terminal half is responsible for the 5' incision. This Actinobacillus pleuropneumoniae serotype 5b (strain L20) protein is UvrABC system protein C.